We begin with the raw amino-acid sequence, 231 residues long: Elongation factor 1-delta (231 aa).

Positions Ser-75–Lys-136 are disordered. Residues Ala-101–Glu-117 are compositionally biased toward acidic residues. A compositionally biased stretch (basic and acidic residues) spans Glu-118 to Ala-127.

It belongs to the EF-1-beta/EF-1-delta family. In terms of assembly, EF-1 is composed of 4 subunits: alpha, beta (1B-alpha=beta'), delta (1B-beta), and gamma (1B-gamma).

Functionally, EF-1-beta and EF-1-beta' stimulate the exchange of GDP bound to EF-1-alpha to GTP. The sequence is that of Elongation factor 1-delta from Beta vulgaris (Sugar beet).